Reading from the N-terminus, the 122-residue chain is MADFNSPIQYLKEDSRDRTSIGSLEYDENADTMIPSFAAGLEEFEPIPDYDPTRSTSLYSQLTHNMERIAEEDDINFQHDTREFTSLVPEETDNKPEDDEESGAKPKKKKHLFPKLSSHKSK.

2 disordered regions span residues 1-27 and 85-122; these read MADF…LEYD and TSLV…HKSK. A2 carries the post-translational modification N-acetylalanine; by host. The span at 105–122 shows a compositional bias: basic residues; it reads KPKKKKHLFPKLSSHKSK.

It belongs to the asfivirus structural protein p14.5 family. In terms of assembly, interacts with the major capsid protein. Interacts with host IRF3; this interaction interferes with the recruitment of IRF3 to TBK1. Acetylated.

The protein resides in the virion. Functionally, structural protein required for transport of intracellular particles from the assembly sites to the plasma membrane. Binds to both ssDNA and dsDNA. Suppressed the activation of the cGAS/STING pathway by interfering with the recruitment of IRF3 to TBK1, which in turn suppresses IRF3 phosphorylation, decreasing interferon production. This is Structural protein p14.5 from African swine fever virus (isolate Tick/Malawi/Lil 20-1/1983) (ASFV).